Consider the following 393-residue polypeptide: Elongation factor Tu (393 aa).

The 194-residue stretch at 10 to 203 folds into the tr-type G domain; the sequence is KPHVNIGTIG…AVDEFIPEPV (194 aa). Positions 19–26 are G1; that stretch reads GHVDHGKT. Residue 19-26 participates in GTP binding; the sequence is GHVDHGKT. Mg(2+) is bound at residue Thr-26. The tract at residues 60–64 is G2; sequence GITIS. The segment at 81–84 is G3; it reads DCPG. GTP contacts are provided by residues 81–85 and 136–139; these read DCPGH and NKVD. Positions 136–139 are G4; that stretch reads NKVD. A G5 region spans residues 173–175; that stretch reads SAL.

This sequence belongs to the TRAFAC class translation factor GTPase superfamily. Classic translation factor GTPase family. EF-Tu/EF-1A subfamily. As to quaternary structure, monomer.

The protein localises to the cytoplasm. The enzyme catalyses GTP + H2O = GDP + phosphate + H(+). In terms of biological role, GTP hydrolase that promotes the GTP-dependent binding of aminoacyl-tRNA to the A-site of ribosomes during protein biosynthesis. In Chlorobium limicola (strain DSM 245 / NBRC 103803 / 6330), this protein is Elongation factor Tu.